A 232-amino-acid polypeptide reads, in one-letter code: Octanoyltransferase (232 aa).

The region spanning Asp-43–Val-231 is the BPL/LPL catalytic domain. Substrate contacts are provided by residues Arg-88–His-95, Ala-160–Gly-162, and Gly-173–Ala-175. Catalysis depends on Cys-191, which acts as the Acyl-thioester intermediate.

The protein belongs to the LipB family.

It is found in the cytoplasm. The enzyme catalyses octanoyl-[ACP] + L-lysyl-[protein] = N(6)-octanoyl-L-lysyl-[protein] + holo-[ACP] + H(+). Its pathway is protein modification; protein lipoylation via endogenous pathway; protein N(6)-(lipoyl)lysine from octanoyl-[acyl-carrier-protein]: step 1/2. Its function is as follows. Catalyzes the transfer of endogenously produced octanoic acid from octanoyl-acyl-carrier-protein onto the lipoyl domains of lipoate-dependent enzymes. Lipoyl-ACP can also act as a substrate although octanoyl-ACP is likely to be the physiological substrate. This chain is Octanoyltransferase, found in Flavobacterium psychrophilum (strain ATCC 49511 / DSM 21280 / CIP 103535 / JIP02/86).